Consider the following 79-residue polypeptide: MLVLTRKMGEVVTIGDSIRIKVVEMKGNQVRLGIEAPNDMRIYREEIYIKVQRENQIAASWSLADLEKAVTCLGADGKE.

This sequence belongs to the CsrA/RsmA family. As to quaternary structure, homodimer; the beta-strands of each monomer intercalate to form a hydrophobic core, while the alpha-helices form wings that extend away from the core.

Its subcellular location is the cytoplasm. A translational regulator that binds mRNA to regulate translation initiation and/or mRNA stability. Usually binds in the 5'-UTR at or near the Shine-Dalgarno sequence preventing ribosome-binding, thus repressing translation. Its main target seems to be the major flagellin gene, while its function is anatagonized by FliW. This chain is Translational regulator CsrA, found in Geobacter sulfurreducens (strain ATCC 51573 / DSM 12127 / PCA).